We begin with the raw amino-acid sequence, 247 residues long: 3-deoxy-manno-octulosonate cytidylyltransferase (247 aa).

It belongs to the KdsB family.

Its subcellular location is the cytoplasm. The enzyme catalyses 3-deoxy-alpha-D-manno-oct-2-ulosonate + CTP = CMP-3-deoxy-beta-D-manno-octulosonate + diphosphate. It functions in the pathway nucleotide-sugar biosynthesis; CMP-3-deoxy-D-manno-octulosonate biosynthesis; CMP-3-deoxy-D-manno-octulosonate from 3-deoxy-D-manno-octulosonate and CTP: step 1/1. The protein operates within bacterial outer membrane biogenesis; lipopolysaccharide biosynthesis. In terms of biological role, activates KDO (a required 8-carbon sugar) for incorporation into bacterial lipopolysaccharide in Gram-negative bacteria. This chain is 3-deoxy-manno-octulosonate cytidylyltransferase, found in Methylorubrum extorquens (strain PA1) (Methylobacterium extorquens).